The following is a 536-amino-acid chain: Cytochrome P450 monooxygenase phqM (536 aa).

Cysteine 464 contacts heme.

The protein belongs to the cytochrome P450 family. It depends on heme as a cofactor.

Its pathway is alkaloid biosynthesis. Cytochrome P450 monooxygenase; part of the gene cluster that mediates the biosynthesis of paraherquamide, a fungal indole alkaloid that belongs to a family of natural products containing a characteristic bicyclo[2.2.2]diazaoctane core. The first steps in the biosynthesis of paraherquamide is the production of the beta-methyl-proline precursor from L-isoleucine. They require oxidation of a terminally hydroxylated L-isoleucine to the corresponding aldehyde by enzymes which have still to be identified. Spontaneous cyclization and dehydration would yield the 4-methyl pyrolline-5-carboxylic acid, which is then reduced by the pyrroline-5-carboxylate reductase phqD leading to the beta-methyl-proline precursor. The next step of paraherquamide biosynthesis involves coupling of beta-methyl-proline and L-tryptophan by the bimodular NRPS phqB, to produce a monooxopiperazine intermediate. The reductase (R) domain of phqB utilizes NADPH for hydride transfer to reduce the thioester bond of the T domain-tethered linear dipeptide to a hemithioaminal intermediate, which spontaneously cleaves the C-S bond to release the aldehyde product. This compound undergoes spontaneous cyclization and dehydration to give a dienamine which is reverse prenylated at C-2 by the reverse prenyltransferase phqJ. The other prenyltransferase present in the cluster, phqI may be a redundant gene in the pathway. During biosynthetic assembly, the key step to produce the polycyclic core is catalyzed by the bifunctional reductase and intramolecular [4+2] Diels-Alderase, phqE, resulting in formation of the [2.2.2] diazaoctane intermediate preparaherquamide. Following formation of preparaherquamide, an indole 2,3-epoxidation-initiated pinacol-like rearrangement is catalyzed by the phqK FAD-dependent monooxygenase. The prenyltransferase phqA, the cytochrome P450 monooxygenase phqL, and the FAD-linked oxidoreductase phqH (or the cytochrome P450 monooxygenase phqM), are proposed to be involved in the formation of the pyran ring. The FAD-dependent monooxygenase phqK is likely responsible for generation of the spiro-oxindole, and the N-methylation is likely mediated by the phqN methyltransferase leading to the isolable natural product paraherquamide F. However, the order of these biosynthetic steps has still to be determined. In late-stage paraherquamide biosynthesis, the third P450 monooxygenase, phqO, is probably responsible for the C-14 hydroxylation, transforming paraherquamide F to paraherquamide G, and paraherquamide E to the final product paraherquamide A. The expansion from the 6-membered ring pyran (in paraherquamides F and G) to the 7-membered dioxepin ring (in paraherquamides A and E) represents a poorly understood but intriguing process that probably involves the 2-oxoglutarate-dependent dioxygenase phqC. Finally, the remaining members of the paraherquamide cluster, including phqI as well as phqM (or phqH), do not have a clearly prescribed role and appear to be redundant. In Penicillium fellutanum, this protein is Cytochrome P450 monooxygenase phqM.